Reading from the N-terminus, the 120-residue chain is Glycine cleavage system H protein (120 aa).

Residues 17–99 (IATVGITSHA…QGAGWLYRMR (83 aa)) form the Lipoyl-binding domain. The residue at position 58 (K58) is an N6-lipoyllysine.

Belongs to the GcvH family. The glycine cleavage system is composed of four proteins: P, T, L and H. (R)-lipoate is required as a cofactor.

In terms of biological role, the glycine cleavage system catalyzes the degradation of glycine. The H protein shuttles the methylamine group of glycine from the P protein to the T protein. This chain is Glycine cleavage system H protein, found in Methylobacterium nodulans (strain LMG 21967 / CNCM I-2342 / ORS 2060).